Consider the following 704-residue polypeptide: Glycogen [starch] synthase, liver (704 aa).

At Ser-8 the chain carries Phosphoserine; by AMPK and PKA. The residue at position 11 (Ser-11) is a Phosphoserine. Residue Lys-40 participates in UDP binding. The UDP-alpha-D-glucose site is built by His-205 and Arg-211. Residues His-291, Glu-292, Gln-294, His-297, and Lys-301 each contribute to the alpha-D-glucose 6-phosphate site. Residue Arg-331 coordinates UDP. Arg-331 contributes to the UDP-alpha-D-glucose binding site. Position 501 (His-501) interacts with alpha-D-glucose 6-phosphate. 3 residues coordinate UDP-alpha-D-glucose: Glu-510, Trp-512, and Gly-513. Position 515 (Thr-515) interacts with UDP. Alpha-D-glucose 6-phosphate is bound by residues Arg-582 and Arg-586. The interval 620-704 (KFHLEPTSPP…KKKLHGEYKN (85 aa)) is disordered. The residue at position 627 (Ser-627) is a Phosphoserine. Ser-641, Ser-645, Ser-649, and Ser-653 each carry phosphoserine; by GSK3-alpha and GSK3-beta. The span at 647–657 (SGSQASSPQCS) shows a compositional bias: low complexity. Ser-657 is modified (phosphoserine; by CK2). The span at 658-675 (DAEDEEDEDERYDEEEEA) shows a compositional bias: acidic residues. Ser-684 is modified (phosphoserine).

It belongs to the glycosyltransferase 3 family. In terms of assembly, part of the glycogen synthase (GS)-glycogenin complex, a heterooctamer composed of a tetramer of GS and 2 dimers of glycogenin, where each GS protomer binds to one glycogenin subunit (via glycogenin C-terminus); the GS tetramer may dissociate from glycogenin dimers to continue glycogen polymerization on its own. May also form a heterooctamer complex with GYG1 (via GYG1 C-terminus). In terms of processing, phosphorylation reduces the activity towards UDP-alpha-D-glucose. Primed phosphorylation at Ser-657 (site 5) by CSNK2A1 and CSNK2A2 is required for inhibitory phosphorylation at Ser-641 (site 3a), Ser-645 (site 3b), Ser-649 (site 3c) and Ser-653 (site 4) by GSK3A an GSK3B. Dephosphorylation at Ser-641 and Ser-645 by PP1 activates the enzyme. Phosphorylation at Ser-8 is not required for interaction with GYG1. Interaction with GYG1 does not regulate the phosphorylation at Ser-8 and Ser-641. As to expression, specifically expressed in liver.

The enzyme catalyses [(1-&gt;4)-alpha-D-glucosyl](n) + UDP-alpha-D-glucose = [(1-&gt;4)-alpha-D-glucosyl](n+1) + UDP + H(+). It participates in glycan biosynthesis; glycogen biosynthesis. With respect to regulation, allosteric activation by glucose-6-phosphate. Phosphorylation reduces the activity towards UDP-glucose. When in the non-phosphorylated state, glycogen synthase does not require glucose-6-phosphate as an allosteric activator; when phosphorylated it does. Functionally, glycogen synthase participates in the glycogen biosynthetic process along with glycogenin and glycogen branching enzyme. Extends the primer composed of a few glucose units formed by glycogenin by adding new glucose units to it. In this context, glycogen synthase transfers the glycosyl residue from UDP-Glc to the non-reducing end of alpha-1,4-glucan. In Mus musculus (Mouse), this protein is Glycogen [starch] synthase, liver.